Here is a 305-residue protein sequence, read N- to C-terminus: Lysosomal thioesterase PPT2 (305 aa).

A signal peptide spans 1–32; the sequence is MLGLPERRLPSAEFLLLLPFLLLLLLLLPAAP. Intrachain disulfides connect C112-C120 and C168-C179. The Nucleophile role is filled by S114. N193 carries an N-linked (GlcNAc...) asparagine glycan. Residues D231 and H286 contribute to the active site. A disulfide bond links C279 and C299.

This sequence belongs to the palmitoyl-protein thioesterase family.

Its subcellular location is the lysosome. The enzyme catalyses hexadecanoyl-CoA + H2O = hexadecanoate + CoA + H(+). The catalysed reaction is S-hexadecanoyl-N-acetylcysteamine + H2O = N-acetylcysteamine + hexadecanoate + H(+). Catalyzes the cleavage of thioester bonds from S-palmitoyl-CoA or S-palmitoyl-N-acetylcysteamine (unbranched structures) but does not have activity against palmitoylcysteine or palmitoylated proteins, branched structures or bulky head groups. Conversely, hydrolyzes both long and short chain fatty acyl-CoA substrate. This chain is Lysosomal thioesterase PPT2 (PPT2), found in Bos taurus (Bovine).